The chain runs to 503 residues: Lysine--tRNA ligase (503 aa).

Mg(2+) contacts are provided by glutamate 412 and glutamate 419.

The protein belongs to the class-II aminoacyl-tRNA synthetase family. Homodimer. The cofactor is Mg(2+).

The protein resides in the cytoplasm. The catalysed reaction is tRNA(Lys) + L-lysine + ATP = L-lysyl-tRNA(Lys) + AMP + diphosphate. This Idiomarina loihiensis (strain ATCC BAA-735 / DSM 15497 / L2-TR) protein is Lysine--tRNA ligase.